Here is a 152-residue protein sequence, read N- to C-terminus: Small ribosomal subunit protein uS11 (152 aa).

This sequence belongs to the universal ribosomal protein uS11 family. In terms of assembly, component of the small ribosomal subunit. Part of the small subunit (SSU) processome, composed of more than 70 proteins and the RNA chaperone small nucleolar RNA (snoRNA) U3.

It is found in the cytoplasm. The protein resides in the nucleus. The protein localises to the nucleolus. Component of the small ribosomal subunit. The ribosome is a large ribonucleoprotein complex responsible for the synthesis of proteins in the cell. Part of the small subunit (SSU) processome, first precursor of the small eukaryotic ribosomal subunit. During the assembly of the SSU processome in the nucleolus, many ribosome biogenesis factors, an RNA chaperone and ribosomal proteins associate with the nascent pre-rRNA and work in concert to generate RNA folding, modifications, rearrangements and cleavage as well as targeted degradation of pre-ribosomal RNA by the RNA exosome. This chain is Small ribosomal subunit protein uS11 (rps-14), found in Caenorhabditis elegans.